A 358-amino-acid polypeptide reads, in one-letter code: Protein-arginine kinase (358 aa).

One can recognise a Phosphagen kinase C-terminal domain in the interval 23–250; that stretch reads VWPVTTFSLA…SKLSVAEVAA (228 aa). ATP contacts are provided by residues 26-30, 174-178, and 203-208; these read VTTFS, KSQCF, and SSLLLG.

Belongs to the ATP:guanido phosphotransferase family.

The catalysed reaction is L-arginyl-[protein] + ATP = N(omega)-phospho-L-arginyl-[protein] + ADP + H(+). Its function is as follows. Catalyzes the specific phosphorylation of arginine residues in proteins. The polypeptide is Protein-arginine kinase (Chlamydia pneumoniae (Chlamydophila pneumoniae)).